Consider the following 166-residue polypeptide: 16S rRNA aminocarboxypropyltransferase (166 aa).

Residues Thr-17, Ile-62, Leu-84, Tyr-99, and Ser-103 each contribute to the S-adenosyl-L-methionine site.

This sequence belongs to the TDD superfamily. TSR3 family.

It is found in the cytoplasm. It catalyses the reaction an N(1)-methylpseudouridine in rRNA + S-adenosyl-L-methionine = N(1)-methyl-N(3)-[(3S)-3-amino-3-carboxypropyl]pseudouridine in rRNA + S-methyl-5'-thioadenosine + H(+). In terms of biological role, aminocarboxypropyltransferase that catalyzes the aminocarboxypropyl transfer on pseudouridine corresponding to position 914 in M.jannaschii 16S rRNA. It constitutes the last step in biosynthesis of the hypermodified N1-methyl-N3-(3-amino-3-carboxypropyl) pseudouridine (m1acp3-Psi). In Saccharolobus islandicus (strain Y.N.15.51 / Yellowstone #2) (Sulfolobus islandicus), this protein is 16S rRNA aminocarboxypropyltransferase.